A 448-amino-acid chain; its full sequence is Methylenetetrahydrofolate--tRNA-(uracil-5-)-methyltransferase TrmFO (448 aa).

10–15 serves as a coordination point for FAD; the sequence is GAGLAG.

It belongs to the MnmG family. TrmFO subfamily. FAD serves as cofactor.

The protein resides in the cytoplasm. The catalysed reaction is uridine(54) in tRNA + (6R)-5,10-methylene-5,6,7,8-tetrahydrofolate + NADH + H(+) = 5-methyluridine(54) in tRNA + (6S)-5,6,7,8-tetrahydrofolate + NAD(+). It carries out the reaction uridine(54) in tRNA + (6R)-5,10-methylene-5,6,7,8-tetrahydrofolate + NADPH + H(+) = 5-methyluridine(54) in tRNA + (6S)-5,6,7,8-tetrahydrofolate + NADP(+). Catalyzes the folate-dependent formation of 5-methyl-uridine at position 54 (M-5-U54) in all tRNAs. The sequence is that of Methylenetetrahydrofolate--tRNA-(uracil-5-)-methyltransferase TrmFO from Lactococcus lactis subsp. cremoris (strain MG1363).